The chain runs to 178 residues: Lipid A deacylase PagL (178 aa).

The first 19 residues, 1 to 19, serve as a signal peptide directing secretion; that stretch reads MQFLKKNKPLFGIVTLALA. Catalysis depends on charge relay system residues histidine 154, serine 156, and aspartate 168.

This sequence belongs to the PagL family. Homodimer.

Its subcellular location is the cell outer membrane. It catalyses the reaction a 3-(acyloxy)acyl derivative of bacterial toxin + H2O = a 3-hydroxyacyl derivative of bacterial toxin + a fatty acid + H(+). In terms of biological role, has lipid A 3-O-deacylase activity. Hydrolyzes the ester bond at the 3 position of lipid A, a bioactive component of lipopolysaccharide (LPS), thereby releasing the primary fatty acyl moiety. In Bordetella bronchiseptica (strain ATCC BAA-588 / NCTC 13252 / RB50) (Alcaligenes bronchisepticus), this protein is Lipid A deacylase PagL.